The following is a 338-amino-acid chain: Heat-inducible transcription repressor HrcA (338 aa).

It belongs to the HrcA family.

Negative regulator of class I heat shock genes (grpE-dnaK-dnaJ and groELS operons). Prevents heat-shock induction of these operons. In Bacillus cereus (strain ATCC 10987 / NRS 248), this protein is Heat-inducible transcription repressor HrcA.